Reading from the N-terminus, the 157-residue chain is uncharacterized protein (157 aa).

A disordered region spans residues 1–157 (MNRGPPLRSR…SFSFLVPSNS (157 aa)). Pro residues predominate over residues 8–31 (RSRPPSSPPPASAFPGPSPFPSPS). The segment covering 62–71 (RTSHPPRCPH) has biased composition (basic residues). Over residues 76–95 (PSAPSPPFTPPHPLPTPTPS) the composition is skewed to pro residues. Low complexity-rich tracts occupy residues 96–117 (SSPR…SLAS) and 124–157 (SFSS…PSNS).

This is an uncharacterized protein from Vitis vinifera (Grape).